We begin with the raw amino-acid sequence, 158 residues long: MVSIEGRFNDASNFRIAIVVARFNDLITNKLLSGCIDCLQRHGVDTSESSPQLDIIWVPGSMELPLICQSLASKGKYQVLITLGAVIRGDTPHFEVVINESSKGIASVARENGIPIIYGVLTTDTMQQALERAGIKSNLGWNYALQALEMASLMKALR.

5-amino-6-(D-ribitylamino)uracil contacts are provided by residues Phe23, 61-63 (SME), and 85-87 (AVI). 90-91 (DT) lines the (2S)-2-hydroxy-3-oxobutyl phosphate pocket. His93 (proton donor) is an active-site residue. Tyr118 provides a ligand contact to 5-amino-6-(D-ribitylamino)uracil. A (2S)-2-hydroxy-3-oxobutyl phosphate-binding site is contributed by Arg132.

The protein belongs to the DMRL synthase family.

It catalyses the reaction (2S)-2-hydroxy-3-oxobutyl phosphate + 5-amino-6-(D-ribitylamino)uracil = 6,7-dimethyl-8-(1-D-ribityl)lumazine + phosphate + 2 H2O + H(+). It participates in cofactor biosynthesis; riboflavin biosynthesis; riboflavin from 2-hydroxy-3-oxobutyl phosphate and 5-amino-6-(D-ribitylamino)uracil: step 1/2. Functionally, catalyzes the formation of 6,7-dimethyl-8-ribityllumazine by condensation of 5-amino-6-(D-ribitylamino)uracil with 3,4-dihydroxy-2-butanone 4-phosphate. This is the penultimate step in the biosynthesis of riboflavin. In Prochlorococcus marinus (strain MIT 9211), this protein is 6,7-dimethyl-8-ribityllumazine synthase.